A 303-amino-acid chain; its full sequence is tRNA dimethylallyltransferase (303 aa).

Residue 9-16 (GPTASGKS) coordinates ATP. 11–16 (TASGKS) contacts substrate. Residues 34–37 (DSKQ) are interaction with substrate tRNA.

The protein belongs to the IPP transferase family. Monomer. The cofactor is Mg(2+).

The enzyme catalyses adenosine(37) in tRNA + dimethylallyl diphosphate = N(6)-dimethylallyladenosine(37) in tRNA + diphosphate. Catalyzes the transfer of a dimethylallyl group onto the adenine at position 37 in tRNAs that read codons beginning with uridine, leading to the formation of N6-(dimethylallyl)adenosine (i(6)A). The chain is tRNA dimethylallyltransferase from Ehrlichia chaffeensis (strain ATCC CRL-10679 / Arkansas).